The chain runs to 335 residues: Biotin synthase (335 aa).

Residues 46-274 form the Radical SAM core domain; sequence YKVQLASLFS…KSKIRLSAGR (229 aa). The [4Fe-4S] cluster site is built by cysteine 61, cysteine 65, and cysteine 68. Residues cysteine 105, cysteine 137, cysteine 197, and arginine 269 each coordinate [2Fe-2S] cluster.

The protein belongs to the radical SAM superfamily. Biotin synthase family. In terms of assembly, homodimer. The cofactor is [4Fe-4S] cluster. It depends on [2Fe-2S] cluster as a cofactor.

The enzyme catalyses (4R,5S)-dethiobiotin + (sulfur carrier)-SH + 2 reduced [2Fe-2S]-[ferredoxin] + 2 S-adenosyl-L-methionine = (sulfur carrier)-H + biotin + 2 5'-deoxyadenosine + 2 L-methionine + 2 oxidized [2Fe-2S]-[ferredoxin]. It functions in the pathway cofactor biosynthesis; biotin biosynthesis; biotin from 7,8-diaminononanoate: step 2/2. Catalyzes the conversion of dethiobiotin (DTB) to biotin by the insertion of a sulfur atom into dethiobiotin via a radical-based mechanism. The sequence is that of Biotin synthase from Prochlorococcus marinus (strain MIT 9515).